The sequence spans 879 residues: Metabotropic glutamate receptor 3 (879 aa).

Residues 1 to 22 form the signal peptide; sequence MKMLTRLQVLTLALFSKGFLLS. Residues 23–576 lie on the Extracellular side of the membrane; the sequence is LGDHNFLRRE…EDYIRWEDAW (554 aa). An intrachain disulfide couples cysteine 57 to cysteine 99. Residues serine 151 and 172-174 contribute to the L-glutamate site; that span reads AST. Asparagine 209 is a glycosylation site (N-linked (GlcNAc...) asparagine). Tyrosine 222 lines the L-glutamate pocket. 7 disulfides stabilise this stretch: cysteine 240–cysteine 527, cysteine 361–cysteine 373, cysteine 412–cysteine 419, cysteine 509–cysteine 528, cysteine 513–cysteine 531, cysteine 534–cysteine 546, and cysteine 549–cysteine 562. Residue asparagine 292 is glycosylated (N-linked (GlcNAc...) asparagine). Aspartate 301 lines the L-glutamate pocket. L-glutamate is bound at residue lysine 389. N-linked (GlcNAc...) asparagine glycosylation is found at asparagine 414 and asparagine 439. The chain crosses the membrane as a helical span at residues 577–599; it reads AIGPVTIACLGFMCTCMVVTVFI. Residues 600–613 lie on the Cytoplasmic side of the membrane; that stretch reads KHNNTPLVKASGRE. A helical transmembrane segment spans residues 614–634; it reads LCYILLFGVGLSYCMTFFFIA. Over 635 to 645 the chain is Extracellular; the sequence is KPSPVICALRR. A helical membrane pass occupies residues 646–664; the sequence is LGLGSSFAICYSALLTKTN. Over 665–688 the chain is Cytoplasmic; the sequence is CIARIFDGVKNGAQRPKFISPSSQ. The helical transmembrane segment at 689 to 709 threads the bilayer; it reads VFICLGLILVQIVMVSVWLIL. The Extracellular segment spans residues 710–734; sequence EAPGTRRYTLAEKRETVILKCNVKD. The chain crosses the membrane as a helical span at residues 735–756; sequence SSMLISLTYDVILVILCTVYAF. Residues 757 to 769 are Cytoplasmic-facing; that stretch reads KTRKCPENFNEAK. A helical transmembrane segment spans residues 770–792; it reads FIGFTMYTTCIIWLAFLPIFYVT. Over 793-802 the chain is Extracellular; that stretch reads SSDYRVQTTT. A helical membrane pass occupies residues 803–828; that stretch reads MCISVSLSGFVVLGCLFAPKVHIILF. Over 829-879 the chain is Cytoplasmic; sequence QPQKNVVTHRLHLNRFSVSGTGTTYSQSSASTYVPTVCNGREVLDSTTSSL.

This sequence belongs to the G-protein coupled receptor 3 family. In terms of assembly, interacts with TAMALIN. In terms of tissue distribution, detected in brain cortex, thalamus, subthalamic nucleus, substantia nigra, hypothalamus, hippocampus, corpus callosum, caudate nucleus and amygdala.

The protein resides in the cell membrane. G-protein coupled receptor for glutamate. Ligand binding causes a conformation change that triggers signaling via guanine nucleotide-binding proteins (G proteins) and modulates the activity of down-stream effectors. Signaling inhibits adenylate cyclase activity. This is Metabotropic glutamate receptor 3 (GRM3) from Homo sapiens (Human).